The following is a 490-amino-acid chain: GTPase Der (490 aa).

2 consecutive EngA-type G domains span residues 3-166 and 203-376; these read PVVA…MDDV and IKLA…DSST. Residues 9 to 16, 56 to 60, 118 to 121, 209 to 216, 256 to 260, and 321 to 324 each bind GTP; these read GRPNVGKS, DTGGI, NKTD, DTAGV, and NKWD. In terms of domain architecture, KH-like spans 377–461; it reads RRVSTAMLTR…PIRIQFKEGE (85 aa).

The protein belongs to the TRAFAC class TrmE-Era-EngA-EngB-Septin-like GTPase superfamily. EngA (Der) GTPase family. As to quaternary structure, associates with the 50S ribosomal subunit.

Functionally, GTPase that plays an essential role in the late steps of ribosome biogenesis. The polypeptide is GTPase Der (Salmonella enteritidis PT4 (strain P125109)).